The sequence spans 344 residues: GTP 3',8-cyclase (344 aa).

The Radical SAM core domain maps to 19-239; the sequence is PFGRTIDYLR…ANYTLTDLPD (221 aa). A GTP-binding site is contributed by Arg28. Cys35 and Cys39 together coordinate [4Fe-4S] cluster. Residue Tyr41 coordinates S-adenosyl-L-methionine. Cys42 contributes to the [4Fe-4S] cluster binding site. Residue Arg77 participates in GTP binding. An S-adenosyl-L-methionine-binding site is contributed by Gly81. Position 111 (Thr111) interacts with GTP. Residue Ser135 participates in S-adenosyl-L-methionine binding. Residue Lys171 coordinates GTP. Residue Met205 participates in S-adenosyl-L-methionine binding. Residues Cys268 and Cys271 each coordinate [4Fe-4S] cluster. 273–275 contributes to the GTP binding site; that stretch reads RVR. Cys285 serves as a coordination point for [4Fe-4S] cluster.

The protein belongs to the radical SAM superfamily. MoaA family. As to quaternary structure, monomer and homodimer. [4Fe-4S] cluster is required as a cofactor.

The enzyme catalyses GTP + AH2 + S-adenosyl-L-methionine = (8S)-3',8-cyclo-7,8-dihydroguanosine 5'-triphosphate + 5'-deoxyadenosine + L-methionine + A + H(+). It participates in cofactor biosynthesis; molybdopterin biosynthesis. In terms of biological role, catalyzes the cyclization of GTP to (8S)-3',8-cyclo-7,8-dihydroguanosine 5'-triphosphate. The polypeptide is GTP 3',8-cyclase (Rhodopseudomonas palustris (strain ATCC BAA-98 / CGA009)).